The sequence spans 504 residues: MVLADLGRKITSALRSLSNATIINEEVLNAMLKEVCTALLEADVNIKLVKQLRENVKSAIDLEEMASGLNKRKMIQHAVFKELVKLVDPGVKAWTPTKGKQNVIMFVGLQGSGKTTTCSKLAYYYQRKGWKTCLICADTFRAGAFDQLKQNATKARIPFYGSYTEMDPVIIASEGVEKFKNENFEIIIVDTSGRHKQEDSLFEEMLQVANAIQPDNIVYVMDASIGQACEAQAKAFKDKVDVASVIVTKLDGHAKGGGALSAVAATKSPIIFIGTGEHIDDFEPFKTQPFISKLLGMGDIEGLIDKVNELKLDDNEALIEKLKHGQFTLRDMYEQFQNIMKMGPFSQILGMIPGFGTDFMSKGNEQESMARLKKLMTIMDSMNDQELDSTDGAKVFSKQPGRIQRVARGSGVSTRDVQELLTQYTKFAQMVKKMGGIKGLFKGGDMSKNVSQSQMAKLNQQMAKMMDPRVLHHMGGMAGLQSMMRQFQQGAAGNMKGMMGFNNM.

Residues 1 to 295 form an NG domain region; the sequence is MVLADLGRKI…KTQPFISKLL (295 aa). Residues 108-115, 190-194, and 248-251 contribute to the GTP site; these read GLQGSGKT, DTSGR, and TKLD. Residues 296–504 form an M-domain region; the sequence is GMGDIEGLID…MKGMMGFNNM (209 aa).

It belongs to the GTP-binding SRP family. SRP54 subfamily. Component of a signal recognition particle (SRP) complex that consists of a 7SL RNA molecule of 300 nucleotides and six protein subunits: SRP72, SRP68, SRP54, SRP19, SRP14 and SRP9. Interacts with RNPS1. Interacts with the SRP receptor subunit SRPRA.

Its subcellular location is the nucleus speckle. It localises to the cytoplasm. The protein localises to the endoplasmic reticulum. It catalyses the reaction GTP + H2O = GDP + phosphate + H(+). Component of the signal recognition particle (SRP) complex, a ribonucleoprotein complex that mediates the cotranslational targeting of secretory and membrane proteins to the endoplasmic reticulum (ER). As part of the SRP complex, associates with the SRP receptor (SR) component SRPRA to target secretory proteins to the endoplasmic reticulum membrane. Binds to the signal sequence of presecretory proteins when they emerge from the ribosomes. Displays basal GTPase activity, and stimulates reciprocal GTPase activation of the SR subunit SRPRA. Forms a guanosine 5'-triphosphate (GTP)-dependent complex with the SR subunit SRPRA. SR compaction and GTPase mediated rearrangement of SR drive SRP-mediated cotranslational protein translocation into the ER. Requires the presence of SRP9/SRP14 and/or SRP19 to stably interact with RNA. Plays a role in proliferation and differentiation of granulocytic cells, neutrophils migration capacity and exocrine pancreas development. This Homo sapiens (Human) protein is Signal recognition particle subunit SRP54.